The following is a 1377-amino-acid chain: MEDIFNFFDKPKDPLHFSAIRISVSSPEKIRERSFGEVKKPETINYRTFKPERDGLFCAKIFGPTKDYECNCGKYKRMKHRGIVCEKCGVEVIPSKVRRERLGHIDLATPVAHIWFLKSLPSRIGNLMDITLKDLEKVLYFEAYVVTDPKNTGMPFAQVFSEDQYQKALEEYGGQFEAGMGAAAIRECLKSMDLDVIADQLRVEMLEATSEAKRKKTAKRLKVVEAFKSSGNKPEWMILECIPVLPPELRPLVPLDGGRFATSDLNDLYRRVINRNNRLKRLMELQAPEVIIRNEKRMLQEAVDALFDNGRRGRAIAGPNKRPLKSLSDMLKGKSGRFRQNLLGKRVDYSGRSVIVVGPELRLHQCGLPKKMALELFKPFIYNKLEEKGYVTTIKSAKKMVEKERPEVWDVLEEVIKEHPVMLNRAPTLHRLGIQAFEPVLIEGKAIQLHPLVCTAFNADFDGDQMAVHLPLSVESQVETRVLMMSTNNILSPAHGKPIIVPSQDMVLGIYYMTRDKYFAKGDGKIFASQEEVRIALDADEVDLQARVKVRLKNLVTDDKPLIVETTPGRVVLREILPDAVPFATINKVMTKKELSNLVDVCYRLAGNKETVILADKLKSIGFRYSTIAGISISINDMVIPEGKPAIIGRASEEVKEIQNQYTEGLITDGERYNKVIDIWAKSTEEIAKEMLDNLSRDIVVAPDGKEVKVPSFNAIHMMADSGSRGSAQQIRQLAGMRGLMAKPSGEIIETPITANFREGLTVLQYFISTHGARKGLADTALKTANSGYLTRRLVDVAQDAIITETDCGTLDGLTVSSLTEGGEVIEHIGDRILGRVALDDILDPVTGDVLVPANEEIDETLVQKIESAGLEKVKIRSVLTCQSRRGICAKCYGRDLARGHLVNMGEAVGVIAAQSIGEPGTQLTMRTFHIGGTASRRAEQTSLEARNEGSIKFININYVTNSEGHHIVMNRNGELAIIDETGREREKYAIVYGAKIKVSPTKLIKQGEALAEWDPYTMPILTEIAGKVKFGDILEGVTMEEQVDEVTGLSRKVVVESRDADKRPRITIKDETGKTAKIHEGTMGRYYLPVGANITVQEDSIVNAGDVIAKIPRETTKTKDITGGLPRVAELFEARKPKDFAVISEIDGVVTFGKDAKGKRKVIVTPDMGEPKEYLIPKGKHISVHEGDHVRAGEALMDGSSNPHDILRVLGQKELAKYLVDEVQEVYRLQGVKINDKHIETIVRQMLRRVRIKEVGDTTLLIDDQLERYIFEDENERVLDKGGRPAIAEPLLLGITKASLSTESFISAASFQETTKVLTQASIEGKVDSLRGLKENVIMGRLIPAGTGLARYRNLKLVVEDSGGVSPQPVEEVSAG.

Zn(2+) contacts are provided by Cys70, Cys72, Cys85, and Cys88. Mg(2+)-binding residues include Asp460, Asp462, and Asp464. Zn(2+) is bound by residues Cys808, Cys882, Cys889, and Cys892.

Belongs to the RNA polymerase beta' chain family. As to quaternary structure, the RNAP catalytic core consists of 2 alpha, 1 beta, 1 beta' and 1 omega subunit. When a sigma factor is associated with the core the holoenzyme is formed, which can initiate transcription. Mg(2+) serves as cofactor. Zn(2+) is required as a cofactor.

It catalyses the reaction RNA(n) + a ribonucleoside 5'-triphosphate = RNA(n+1) + diphosphate. Its function is as follows. DNA-dependent RNA polymerase catalyzes the transcription of DNA into RNA using the four ribonucleoside triphosphates as substrates. This is DNA-directed RNA polymerase subunit beta' from Geotalea uraniireducens (strain Rf4) (Geobacter uraniireducens).